The chain runs to 432 residues: Glutamine synthetase, chloroplastic (432 aa).

The GS beta-grasp domain maps to 79-159 (IIAEYIWIGG…VICDTYTPQG (81 aa)). A GS catalytic domain is found at 166 to 432 (KRHKAAQIFS…LAAQKLSLNV (267 aa)).

Belongs to the glutamine synthetase family. Homooctamer.

The protein resides in the plastid. The protein localises to the chloroplast. It catalyses the reaction L-glutamate + NH4(+) + ATP = L-glutamine + ADP + phosphate + H(+). In terms of biological role, the light-modulated chloroplast enzyme, encoded by a nuclear gene and expressed primarily in leaves, is responsible for the reassimilation of the ammonia generated by photorespiration. The chain is Glutamine synthetase, chloroplastic (GLN2) from Daucus carota (Wild carrot).